The sequence spans 247 residues: Phycocyanobilin:ferredoxin oxidoreductase (247 aa).

It belongs to the HY2 family.

The catalysed reaction is (2R,3Z)-phycocyanobilin + 4 oxidized [2Fe-2S]-[ferredoxin] = biliverdin IXalpha + 4 reduced [2Fe-2S]-[ferredoxin] + 4 H(+). Its function is as follows. Catalyzes the four-electron reduction of biliverdin IX-alpha (2-electron reduction at both the A and D rings); the reaction proceeds via an isolatable 2-electron intermediate, 181,182-dihydrobiliverdin. The polypeptide is Phycocyanobilin:ferredoxin oxidoreductase (Synechococcus sp. (strain CC9605)).